A 662-amino-acid chain; its full sequence is Eukaryotic peptide chain release factor GTP-binding subunit (662 aa).

The segment at Met-1 to Asp-220 is disordered. The span at Ala-26–Pro-40 shows a compositional bias: low complexity. Over residues Tyr-62–Thr-89 the composition is skewed to polar residues. A compositionally biased stretch (basic and acidic residues) spans Asp-91–Lys-102. Residues Gly-122–Ile-134 show a composition bias toward polar residues. The span at Thr-141–Thr-158 shows a compositional bias: low complexity. The residue at position 182 (Thr-182) is a Phosphothreonine. Positions Ala-192–Thr-213 are enriched in low complexity. The tr-type G domain maps to Lys-236–Lys-464. A G1 region spans residues Gly-245 to Ser-252. Gly-245–Ser-252 is a GTP binding site. Positions Gly-301–Glu-305 are G2. Positions Asp-322–Gly-325 are G3. GTP contacts are provided by residues Asn-384 to Asp-387 and Ala-428 to Tyr-429. Residues Asn-384–Asp-387 form a G4 region. Positions Ser-427–Tyr-429 are G5. Ser-539 is subject to Phosphoserine.

The protein belongs to the TRAFAC class translation factor GTPase superfamily. Classic translation factor GTPase family. ERF3 subfamily. Component of the eRF1-eRF3-GTP ternary complex, composed of sup45/eRF1, sup35/eRF3 and GTP.

It localises to the cytoplasm. It carries out the reaction GTP + H2O = GDP + phosphate + H(+). Its function is as follows. GTPase component of the eRF1-eRF3-GTP ternary complex, a ternary complex that mediates translation termination in response to the termination codons. Sup35/eRF3 mediates sup45/ERF1 delivery to stop codons: The eRF1-eRF3-GTP complex binds to a stop codon in the ribosomal A-site. GTP hydrolysis by sup35/eRF3 induces a conformational change that leads to its dissociation, permitting sup45/eRF1 to accommodate fully in the A-site. The sequence is that of Eukaryotic peptide chain release factor GTP-binding subunit (sup35) from Schizosaccharomyces pombe (strain 972 / ATCC 24843) (Fission yeast).